Consider the following 388-residue polypeptide: Formate-dependent phosphoribosylglycinamide formyltransferase (388 aa).

N(1)-(5-phospho-beta-D-ribosyl)glycinamide is bound by residues 11 to 12 (EL) and E71. ATP-binding positions include R103, K144, 149-154 (SSGKGQ), 184-187 (EEFI), and E192. Positions 108–300 (DLAAKELGLK…EFELHLRAVL (193 aa)) constitute an ATP-grasp domain. Residues E257 and E270 each contribute to the Mg(2+) site. N(1)-(5-phospho-beta-D-ribosyl)glycinamide-binding positions include D277, K349, and 356–357 (RR).

Belongs to the PurK/PurT family. In terms of assembly, homodimer.

The catalysed reaction is N(1)-(5-phospho-beta-D-ribosyl)glycinamide + formate + ATP = N(2)-formyl-N(1)-(5-phospho-beta-D-ribosyl)glycinamide + ADP + phosphate + H(+). It functions in the pathway purine metabolism; IMP biosynthesis via de novo pathway; N(2)-formyl-N(1)-(5-phospho-D-ribosyl)glycinamide from N(1)-(5-phospho-D-ribosyl)glycinamide (formate route): step 1/1. Functionally, involved in the de novo purine biosynthesis. Catalyzes the transfer of formate to 5-phospho-ribosyl-glycinamide (GAR), producing 5-phospho-ribosyl-N-formylglycinamide (FGAR). Formate is provided by PurU via hydrolysis of 10-formyl-tetrahydrofolate. This chain is Formate-dependent phosphoribosylglycinamide formyltransferase, found in Bacteroides fragilis (strain ATCC 25285 / DSM 2151 / CCUG 4856 / JCM 11019 / LMG 10263 / NCTC 9343 / Onslow / VPI 2553 / EN-2).